We begin with the raw amino-acid sequence, 229 residues long: MVERLAELERALGITFRDRKLLQTALMHRSLFNEQPHLLSNLSDNERLEFLGDSVLHFVTTTWLFQQFPHQNESTLTSWRAALVSTKGLAECAATLNLGQYAFLSRGEDTPKGRQRSKLLADLFEAVIGAIYLDQGLEAARAFIEPFLHERIGTLQTAVLDPTTRLQEIVQSRHKQLPKYYLIDERGPDHQREYVMAVTVEGHEYTGTGPSKKAAKKAAAQAALADIDR.

The RNase III domain occupies 5-136 (LAELERALGI…VIGAIYLDQG (132 aa)). Residue E49 coordinates Mg(2+). D53 is an active-site residue. Positions 122 and 125 each coordinate Mg(2+). The active site involves E125. A DRBM domain is found at 161–229 (DPTTRLQEIV…AQAALADIDR (69 aa)).

Belongs to the ribonuclease III family. In terms of assembly, homodimer. Mg(2+) is required as a cofactor.

Its subcellular location is the cytoplasm. It carries out the reaction Endonucleolytic cleavage to 5'-phosphomonoester.. Functionally, digests double-stranded RNA. Involved in the processing of primary rRNA transcript to yield the immediate precursors to the large and small rRNAs (23S and 16S). Processes some mRNAs, and tRNAs when they are encoded in the rRNA operon. Processes pre-crRNA and tracrRNA of type II CRISPR loci if present in the organism. This Chloroflexus aggregans (strain MD-66 / DSM 9485) protein is Ribonuclease 3.